The primary structure comprises 1040 residues: Myoblast growth factor receptor egl-15 (1040 aa).

Residues 1-19 (MSYFLASCLGVGLLSTVSC) form the signal peptide. Over 20-525 (SLQGLTSHYR…PKIDRWTTSD (506 aa)) the chain is Extracellular. Residues 33–125 (PRFKHVANER…GQISRNFTVE (93 aa)) form the Ig-like C2-type 1 domain. An intrachain disulfide couples Cys55 to Cys109. N-linked (GlcNAc...) asparagine glycosylation occurs at Asn121. A compositionally biased stretch (basic and acidic residues) spans 234–257 (VHDSEESPSESRTEFINADEKENK). The tract at residues 234–267 (VHDSEESPSESRTEFINADEKENKEDEEEDYSVS) is disordered. Asn280 and Asn299 each carry an N-linked (GlcNAc...) asparagine glycan. 2 Ig-like C2-type domains span residues 287–383 (PYFK…FHVI) and 391–501 (PPII…ATLT). A disulfide bond links Cys314 and Cys367. Residues Asn401, Asn407, Asn433, Asn440, Asn449, Asn474, and Asn497 are each glycosylated (N-linked (GlcNAc...) asparagine). A disulfide bond links Cys414 and Cys485. The helical transmembrane segment at 526–549 (YIFTTILLFLLLAATLFGILFMVC) threads the bilayer. Over 550 to 1040 (KQTLHKKGFM…NNNSMSKPEF (491 aa)) the chain is Cytoplasmic. Positions 640–931 (LSLVHMLGEG…KTIVDYLDWM (292 aa)) constitute a Protein kinase domain. ATP-binding positions include 646–654 (LGEGAFGEV) and Lys672. Asp797 (proton acceptor) is an active-site residue. Position 828 is a phosphotyrosine; by autocatalysis (Tyr828). 2 disordered regions span residues 952–984 (ERST…LPSE) and 1021–1040 (TPET…KPEF). Positions 1022 to 1040 (PETSQRIPSNNNSMSKPEF) are enriched in polar residues.

This sequence belongs to the protein kinase superfamily. Tyr protein kinase family. Fibroblast growth factor receptor subfamily. It depends on Mg(2+) as a cofactor. Post-translationally, activity is regulated by the phosphatase clr-1, however it is not known whether clr-1 acts directly on egl-15.

It localises to the membrane. It catalyses the reaction L-tyrosyl-[protein] + ATP = O-phospho-L-tyrosyl-[protein] + ADP + H(+). Its function is as follows. Receptor tyrosine kinase required for larval development. May phosphorylate adapter protein soc-1 which in turn may result in the recruitment and/or activation of phosphatase ptp-2. May activate the Ras/MAPK kinase signaling pathway which includes sem-5, sos-1, let-60/Ras, lin-45/Raf, mek-2 and mpk-1. Acts in the hypodermis to regulate axon growth and fluid homeostasis. Activates protein degradation in muscles. Probably following interaction with ligand let-756, negatively regulates membrane protrusion from body wall muscles during larval development. Plays a role in nicotinic acetylcholine receptor (nAChR)-mediated sensitivity to nicotine. Regulates synaptic levels of nAChR subunit lev-1 in the nerve cord. Affects the maintenance of axon position without affecting axon growth. Interaction with egl-17 is required for the guidance of sex myoblast migration during gonad development. Functionally, interaction with let-756 appears to play a role in maintaining body morphology at higher temperatures. The sequence is that of Myoblast growth factor receptor egl-15 (egl-15) from Caenorhabditis elegans.